The primary structure comprises 178 residues: ATP synthase subunit delta (178 aa).

The protein belongs to the ATPase delta chain family. F-type ATPases have 2 components, F(1) - the catalytic core - and F(0) - the membrane proton channel. F(1) has five subunits: alpha(3), beta(3), gamma(1), delta(1), epsilon(1). F(0) has three main subunits: a(1), b(2) and c(10-14). The alpha and beta chains form an alternating ring which encloses part of the gamma chain. F(1) is attached to F(0) by a central stalk formed by the gamma and epsilon chains, while a peripheral stalk is formed by the delta and b chains.

The protein resides in the cell inner membrane. In terms of biological role, f(1)F(0) ATP synthase produces ATP from ADP in the presence of a proton or sodium gradient. F-type ATPases consist of two structural domains, F(1) containing the extramembraneous catalytic core and F(0) containing the membrane proton channel, linked together by a central stalk and a peripheral stalk. During catalysis, ATP synthesis in the catalytic domain of F(1) is coupled via a rotary mechanism of the central stalk subunits to proton translocation. This protein is part of the stalk that links CF(0) to CF(1). It either transmits conformational changes from CF(0) to CF(1) or is implicated in proton conduction. This chain is ATP synthase subunit delta, found in Pseudomonas putida (strain W619).